Here is a 557-residue protein sequence, read N- to C-terminus: Glutamine--tRNA ligase (557 aa).

The short motif at 42–52 (PEPNGYLHIGH) is the 'HIGH' region element. ATP-binding positions include 43–45 (EPN) and 49–55 (HIGHAKS). L-glutamine-binding residues include aspartate 75 and tyrosine 220. Residues threonine 239 and 270–271 (RL) contribute to the ATP site. The 'KMSKS' region signature appears at 277 to 281 (LTSKR).

Belongs to the class-I aminoacyl-tRNA synthetase family. As to quaternary structure, monomer.

It localises to the cytoplasm. It carries out the reaction tRNA(Gln) + L-glutamine + ATP = L-glutaminyl-tRNA(Gln) + AMP + diphosphate. This is Glutamine--tRNA ligase from Haemophilus influenzae (strain 86-028NP).